An 80-amino-acid polypeptide reads, in one-letter code: Protein FAM229B (80 aa).

The segment at 1-44 is disordered; the sequence is MPFRFGTQPRRFPVEGGDSSIGLEPGLSSSATCNGKEMSPTRQL.

It belongs to the FAM229 family.

In Bos taurus (Bovine), this protein is Protein FAM229B (FAM229B).